A 697-amino-acid polypeptide reads, in one-letter code: MKTTVTTSVGGKQITIETGRLAKQADGAALVSSGNNMVLVTATSSKKASELDFFPLTVEYIEKFYATGKIPGGYFKREAKPTNDAVLIARLIDRPIRPVFPEGYRHETQIVATVLSADGAFPLEILASLGASAALHCSDIPFNGPTAAVQIARVDGQFVANPTPQQMEKSDMDMIVAGTRNGLLMVEGETKFISEADALAALKFGHQSLIPLLNAQDELREKAGSVAKRAFTAPSIDADFKAKAESLLRPKIAAALSIKEKQDRYAAANEAAAEAEKALLADIADKELLKQRKKELNSIVEDLKYQEARSMILDRAVRIDGRDVKTVRPIANEVGILPRAHGSGLFTRGETQVLGTVTLGTADDEQMVDSLLGLQKRKFMLHYNFPPYSVGEVGRMSGTSRREIGHGNLAERAIKAVLPDFEKFPYTIRIVSEVLESNGSSSMGTVCSGIMALLDAGVPLKGNVAGVAMGLIKEGDRVAVLTDILGDEDHLGDMDFKVAGSPAGITALQMDIKIDSVSFEVMEQALAQAKEGRAHILNEMEKVMKVPRGQISEFAPRIETIKIKPDKIREVIGSGGKVIRGITEATGVKIEIQDDGTINIASADPEATKKAIAMINDIIAEAEVGKTYKGRIVKIAEFGAFVEILPNTQGLLHISEISNERVRAVSDVLKEGEIIDVKVLEVDRSGRVKLSRKALLQ.

Residues Asp-489 and Asp-495 each coordinate Mg(2+). Residues 556–615 form the KH domain; it reads PRIETIKIKPDKIREVIGSGGKVIRGITEATGVKIEIQDDGTINIASADPEATKKAIAMI. Positions 625 to 693 constitute an S1 motif domain; the sequence is GKTYKGRIVK…RSGRVKLSRK (69 aa).

This sequence belongs to the polyribonucleotide nucleotidyltransferase family. Requires Mg(2+) as cofactor.

It localises to the cytoplasm. It catalyses the reaction RNA(n+1) + phosphate = RNA(n) + a ribonucleoside 5'-diphosphate. Its function is as follows. Involved in mRNA degradation. Catalyzes the phosphorolysis of single-stranded polyribonucleotides processively in the 3'- to 5'-direction. The protein is Polyribonucleotide nucleotidyltransferase of Bdellovibrio bacteriovorus (strain ATCC 15356 / DSM 50701 / NCIMB 9529 / HD100).